Consider the following 168-residue polypeptide: uncharacterized protein (168 aa).

The next 2 membrane-spanning stretches (helical) occupy residues 4–24 (IIALLFFFLIAFGYSLSPEEE) and 94–114 (IMVGIFAGQIALVAAVIGFAW).

This sequence to A.aeolicus aq_1446.

Its subcellular location is the cell membrane. This is an uncharacterized protein from Aquifex aeolicus (strain VF5).